Here is a 396-residue protein sequence, read N- to C-terminus: Alanine racemase (396 aa).

K46 (proton acceptor; specific for D-alanine) is an active-site residue. K46 is subject to N6-(pyridoxal phosphate)lysine. R145 provides a ligand contact to substrate. Catalysis depends on Y280, which acts as the Proton acceptor; specific for L-alanine. M328 is a substrate binding site.

This sequence belongs to the alanine racemase family. The cofactor is pyridoxal 5'-phosphate.

It carries out the reaction L-alanine = D-alanine. The protein operates within amino-acid biosynthesis; D-alanine biosynthesis; D-alanine from L-alanine: step 1/1. Catalyzes the interconversion of L-alanine and D-alanine. May also act on other amino acids. The protein is Alanine racemase (alr) of Brucella canis (strain ATCC 23365 / NCTC 10854 / RM-666).